The primary structure comprises 366 residues: Aminomethyltransferase (366 aa).

Belongs to the GcvT family. As to quaternary structure, the glycine cleavage system is composed of four proteins: P, T, L and H.

It carries out the reaction N(6)-[(R)-S(8)-aminomethyldihydrolipoyl]-L-lysyl-[protein] + (6S)-5,6,7,8-tetrahydrofolate = N(6)-[(R)-dihydrolipoyl]-L-lysyl-[protein] + (6R)-5,10-methylene-5,6,7,8-tetrahydrofolate + NH4(+). In terms of biological role, the glycine cleavage system catalyzes the degradation of glycine. This is Aminomethyltransferase from Bacillus cereus (strain ATCC 10987 / NRS 248).